We begin with the raw amino-acid sequence, 902 residues long: 4-hydroxyphenylacetate decarboxylase glycyl radical subunit (902 aa).

The PFL domain maps to 38–774; it reads KRAEDLLDVY…ATLATPDGRL (737 aa). S348 and C507 together coordinate 4-hydroxyphenylacetate. C507 serves as the catalytic Cysteine radical intermediate. The Proton donor role is filled by E509. 4-hydroxyphenylacetate is bound by residues H540 and E641. One can recognise a Glycine radical domain in the interval 782–902; the sequence is GSVSAYAGTD…VIARTEYEGV (121 aa). G877 is modified (glycine radical).

It belongs to the glycyl radical enzyme (GRE) family. HPAD subfamily. In terms of assembly, heterooctamer consisting of 4 large (HpdB) subunits and 4 small (HpdC) subunits, arranged as a tetramer of heterodimers. Also forms a catalytically inactive homodimer. Requires the activating protein CsdA to generate the key active site glycyl radical that is involved in catalysis. In terms of processing, phosphorylated on serine. Phosphorylation may trigger the formation of the active heterooctamers and thereby regulates enzyme activity.

The catalysed reaction is 4-hydroxyphenylacetate + H(+) = 4-methylphenol + CO2. It catalyses the reaction 3,4-dihydroxyphenylacetate + H(+) = 4-methylcatechol + CO2. Glycyl radical subunit of the HPA decarboxylase that decarboxylates phenylacetates with a hydroxyl group in the p-position. Active toward 4-hydroxyphenylacetate and 3,4-dihydroxyphenylacetate, forming 4-methylphenol and 4-methylcatechol, respectively. Is likely involved in the catabolism of aromatic amino acids such as tyrosine fermentation. 4-methylphenol (p-cresol) formation provides metabolic toxicity, which allows an active suppression of other microbes and may provide growth advantages for the producers in highly competitive environments. The large subunit is the catalytic subunit that binds the substrate. The sequence is that of 4-hydroxyphenylacetate decarboxylase glycyl radical subunit from Clostridioides difficile (strain CD196) (Peptoclostridium difficile).